The sequence spans 363 residues: MHFLRRPISLRQRLILTIGAILLVFELISVFWLWHESTEQIQLFEQALRDNRNNDRHIMREIREAVASLIVPGVFMVSLTLFICYQAVRRITRPLAELQKELEARTADNLTPIAIHSATLEIEAVVSALNDLVSRLTSTLDNERLFTADVAHELRTPLAGVRLHLELLAKTHHIDVAPLVARLDQMMESVSQLLQLARAGQSFSSGNYQHVKLLEDVILPSYDELSTMLDQRQQTLLLPESAADITVQGDATLLRMLLRNLVENAHRYSPQGSNIMIKLQEDDGAVMAVEDEGPGIDESKCGELSKAFVRMDSRYGGIGLGLSIVSRITQLHHGQFFLQNRQETSGTRAWVRLKKDQYVANQI.

Topologically, residues 1-13 (MHFLRRPISLRQR) are cytoplasmic. The helical transmembrane segment at 14–34 (LILTIGAILLVFELISVFWLW) threads the bilayer. Over 35–64 (HESTEQIQLFEQALRDNRNNDRHIMREIRE) the chain is Periplasmic. The chain crosses the membrane as a helical span at residues 65–88 (AVASLIVPGVFMVSLTLFICYQAV). Residues 89 to 141 (RRITRPLAELQKELEARTADNLTPIAIHSATLEIEAVVSALNDLVSRLTSTLD) enclose the HAMP domain. The Cytoplasmic segment spans residues 89–363 (RRITRPLAEL…KKDQYVANQI (275 aa)). In terms of domain architecture, Histidine kinase spans 149 to 357 (DVAHELRTPL…RAWVRLKKDQ (209 aa)). At histidine 152 the chain carries Phosphohistidine; by autocatalysis.

Post-translationally, autophosphorylated.

The protein resides in the cell inner membrane. It carries out the reaction ATP + protein L-histidine = ADP + protein N-phospho-L-histidine.. Functionally, member of the two-component regulatory system BasS/BasR Autophosphorylates and activates BasR by phosphorylation. The sequence is that of Sensor protein BasS (basS) from Escherichia coli (strain K12).